The primary structure comprises 434 residues: 3-phosphoshikimate 1-carboxyvinyltransferase (434 aa).

3-phosphoshikimate contacts are provided by Lys-22, Ser-23, and Arg-27. Lys-22 contacts phosphoenolpyruvate. Phosphoenolpyruvate-binding residues include Gly-93 and Arg-121. 3-phosphoshikimate is bound by residues Ser-168, Ser-169, Gln-170, Ser-199, Asp-320, and Lys-347. Gln-170 contacts phosphoenolpyruvate. Asp-320 (proton acceptor) is an active-site residue. Residues Arg-351, Arg-394, and Lys-419 each contribute to the phosphoenolpyruvate site.

It belongs to the EPSP synthase family. Monomer.

It localises to the cytoplasm. It carries out the reaction 3-phosphoshikimate + phosphoenolpyruvate = 5-O-(1-carboxyvinyl)-3-phosphoshikimate + phosphate. Its pathway is metabolic intermediate biosynthesis; chorismate biosynthesis; chorismate from D-erythrose 4-phosphate and phosphoenolpyruvate: step 6/7. Catalyzes the transfer of the enolpyruvyl moiety of phosphoenolpyruvate (PEP) to the 5-hydroxyl of shikimate-3-phosphate (S3P) to produce enolpyruvyl shikimate-3-phosphate and inorganic phosphate. The sequence is that of 3-phosphoshikimate 1-carboxyvinyltransferase from Burkholderia multivorans (strain ATCC 17616 / 249).